A 446-amino-acid polypeptide reads, in one-letter code: High mobility group B protein 13 (446 aa).

2 disordered regions span residues 1–43 (MSTV…TKSF) and 110–130 (LAQTEEEKKGKKKKKDCAETK). Over residues 11–22 (AKKSRNSRKALK) the composition is skewed to basic residues. 2 DNA-binding regions (HMG box) span residues 129-197 (TKRP…TKEK) and 246-312 (PKQP…EGYK). The span at 349 to 371 (NIIKKTKETAKNKKKNENVDPNK) shows a compositional bias: basic and acidic residues. Residues 349 to 377 (NIIKKTKETAKNKKKNENVDPNKPKKPTS) are disordered. Residues 372–440 (PKKPTSSYFL…AYKKEVEEYN (69 aa)) constitute a DNA-binding region (HMG box 3).

Belongs to the HMGB family.

The protein resides in the nucleus. This chain is High mobility group B protein 13 (HMGB13), found in Arabidopsis thaliana (Mouse-ear cress).